Reading from the N-terminus, the 255-residue chain is NAD kinase (255 aa).

The active-site Proton acceptor is Asp44. NAD(+) contacts are provided by residues 44 to 45 (DG), His49, 114 to 115 (NE), Asp144, Ala152, 155 to 160 (SAYNLS), and Gln216.

This sequence belongs to the NAD kinase family. Requires a divalent metal cation as cofactor.

The protein localises to the cytoplasm. It carries out the reaction NAD(+) + ATP = ADP + NADP(+) + H(+). Functionally, involved in the regulation of the intracellular balance of NAD and NADP, and is a key enzyme in the biosynthesis of NADP. Catalyzes specifically the phosphorylation on 2'-hydroxyl of the adenosine moiety of NAD to yield NADP. In Rickettsia prowazekii (strain Madrid E), this protein is NAD kinase.